A 116-amino-acid chain; its full sequence is MHILFLFIFHCLAFKDLIFFKQYVPFAAAGGYPISFLFIKVLTASTNLLLSSSSGGSWNKLSKESQLLKVILTHFLVPIFFFLFQYIILSEDRQQERQPKFRDNAKFDGHAKTCHI.

2 consecutive transmembrane segments (helical) span residues 24 to 44 (VPFAAAGGYPISFLFIKVLTA) and 70 to 90 (VILTHFLVPIFFFLFQYIILS).

The protein localises to the membrane. This is an uncharacterized protein from Saccharomyces cerevisiae (strain ATCC 204508 / S288c) (Baker's yeast).